The chain runs to 289 residues: Lipoyl synthase (289 aa).

Cys-33, Cys-38, Cys-44, Cys-59, Cys-63, Cys-66, and Ser-274 together coordinate [4Fe-4S] cluster. The Radical SAM core domain maps to 45–263 (FAGGTATFLI…SQGESELGFL (219 aa)).

Belongs to the radical SAM superfamily. Lipoyl synthase family. [4Fe-4S] cluster serves as cofactor.

Its subcellular location is the cytoplasm. The catalysed reaction is [[Fe-S] cluster scaffold protein carrying a second [4Fe-4S](2+) cluster] + N(6)-octanoyl-L-lysyl-[protein] + 2 oxidized [2Fe-2S]-[ferredoxin] + 2 S-adenosyl-L-methionine + 4 H(+) = [[Fe-S] cluster scaffold protein] + N(6)-[(R)-dihydrolipoyl]-L-lysyl-[protein] + 4 Fe(3+) + 2 hydrogen sulfide + 2 5'-deoxyadenosine + 2 L-methionine + 2 reduced [2Fe-2S]-[ferredoxin]. The protein operates within protein modification; protein lipoylation via endogenous pathway; protein N(6)-(lipoyl)lysine from octanoyl-[acyl-carrier-protein]: step 2/2. Functionally, catalyzes the radical-mediated insertion of two sulfur atoms into the C-6 and C-8 positions of the octanoyl moiety bound to the lipoyl domains of lipoate-dependent enzymes, thereby converting the octanoylated domains into lipoylated derivatives. This chain is Lipoyl synthase, found in Synechococcus sp. (strain RCC307).